The primary structure comprises 600 residues: Arginine--tRNA ligase (600 aa).

L-arginine contacts are provided by residues 151–153, His162, Tyr332, Asp336, and Gln360; that span reads SPN. The 'HIGH' region motif lies at 152 to 162; sequence PNIAKEMHIGH.

Belongs to the class-I aminoacyl-tRNA synthetase family.

The enzyme catalyses tRNA(Arg) + L-arginine + ATP = L-arginyl-tRNA(Arg) + AMP + diphosphate. This chain is Arginine--tRNA ligase (RARS), found in Acanthamoeba polyphaga mimivirus (APMV).